The sequence spans 286 residues: MGQKIHPTGFRLSVLKNWSSKWYANGKSFPGMLNEDIKVREYLKKKLAHASVGRVVIERPSKNARITIYSSRPGVVIGKKGEDIEVLRGALQKLMGVPVHVNIEEIRKPEIDAQLIADNIAQQLEKRIMFRRAMKRAMQNAMRLGAQGIKIMSSGRLNGIEIARTEWYREGRVPLHTLRADLDYGVSEAKTTYGVIGIKVWVFKGEVIGRGEQAGAGTAAPQVLPPAGEPETRRPPRRPAGRADARSDGKAGEKKGPRKSDNSSEESATKPAKKPVKPGVNDAAAS.

The KH type-2 domain maps to 39-107 (VREYLKKKLA…PVHVNIEEIR (69 aa)). A disordered region spans residues 213–286 (QAGAGTAAPQ…KPGVNDAAAS (74 aa)). The span at 241–262 (GRADARSDGKAGEKKGPRKSDN) shows a compositional bias: basic and acidic residues.

The protein belongs to the universal ribosomal protein uS3 family. As to quaternary structure, part of the 30S ribosomal subunit. Forms a tight complex with proteins S10 and S14.

Functionally, binds the lower part of the 30S subunit head. Binds mRNA in the 70S ribosome, positioning it for translation. This chain is Small ribosomal subunit protein uS3, found in Nitrosospira multiformis (strain ATCC 25196 / NCIMB 11849 / C 71).